Consider the following 618-residue polypeptide: DnaJ homolog subfamily C member 2 (618 aa).

The J domain occupies 85 to 158; it reads DHYAVLGLAH…VKRRAFDSVD (74 aa). Disordered regions lie at residues 281–315, 330–349, and 419–448; these read KEEE…QQEE, QAAQ…IKKE, and LQKE…QNNR. Over residues 428–448 the composition is skewed to polar residues; it reads QAQQAARGSEHSSAAGGQNNR. 2 consecutive SANT domains span residues 445–507 and 548–603; these read QNNR…KLDP and SNAA…EMIK.

In terms of assembly, component of ribosome-associated complex (RAC).

It is found in the nucleus. Its subcellular location is the cytoplasm. The protein resides in the cytosol. Acts both as a chaperone in the cytosol and as a chromatin regulator in the nucleus. When cytosolic, acts as a molecular chaperone: component of the ribosome-associated complex (RAC), a complex involved in folding or maintaining nascent polypeptides in a folding-competent state. When nuclear, mediates the switching from polycomb-repressed genes to an active state: specifically recruited at histone H2A ubiquitinated at 'Lys-119' (H2AK119ub), and promotes the displacement of the polycomb PRC1 complex from chromatin, thereby facilitating transcription activation. The polypeptide is DnaJ homolog subfamily C member 2 (dnajc2) (Danio rerio (Zebrafish)).